Reading from the N-terminus, the 126-residue chain is Glycine cleavage system H protein (126 aa).

Positions 22–104 (IATVGITAFA…YGRGWLFKVE (83 aa)) constitute a Lipoyl-binding domain. Residue lysine 63 is modified to N6-lipoyllysine.

Belongs to the GcvH family. As to quaternary structure, the glycine cleavage system is composed of four proteins: P, T, L and H. The cofactor is (R)-lipoate.

The glycine cleavage system catalyzes the degradation of glycine. The H protein shuttles the methylamine group of glycine from the P protein to the T protein. In Thermobifida fusca (strain YX), this protein is Glycine cleavage system H protein.